We begin with the raw amino-acid sequence, 105 residues long: Small ribosomal subunit protein uS10 (105 aa).

It belongs to the universal ribosomal protein uS10 family. Part of the 30S ribosomal subunit.

Involved in the binding of tRNA to the ribosomes. This is Small ribosomal subunit protein uS10 from Anaplasma marginale (strain Florida).